Reading from the N-terminus, the 389-residue chain is Protein P4 (389 aa).

This chain is Protein P4, found in Rice tungro bacilliform virus (isolate Philippines) (RTBV).